An 845-amino-acid polypeptide reads, in one-letter code: ATPase morc-1 (845 aa).

ATP contacts are provided by residues asparagine 43, 88–90, and 97–103; these read SAK and RYGNGLK. Asparagine 43 contacts Mg(2+). The stretch at 284-311 forms a coiled coil; that stretch reads AAYNKILDEKNETVKKCEEEKALVMSEI. Lysine 422 is a binding site for ATP. 2 disordered regions span residues 566–590 and 628–739; these read LPQK…SASS and KMEP…GKAV. The span at 574-590 shows a compositional bias: low complexity; sequence SAPSSSDSQNSIRSASS. Residues 637–646 show a composition bias toward basic and acidic residues; sequence HDSHIAEVQR.

Predominantly forms monomers and dimers, but multimerizes to form trimers and tetramers upon DNA binding. As to expression, expressed in germline and somatic cells.

The protein localises to the nucleus. It localises to the nuclear body. The catalysed reaction is ATP + H2O = ADP + phosphate + H(+). Functionally, binds non-specifically to DNA and forms static foci which grow by recruiting other morc-1 molecules, and thereby stimulates conformational changes and compaction of DNA, which appears to be enhanced by ATP-binding, but does not require ATP activity. Preferentially binds to long DNAs. Compacts and entraps segments of DNA by sequentially forming loops along the DNA, beginning at the free ends of single- and double-tethered DNA. Does not extrude the DNA loops on compacted double-tethered DNA. Involved in gene silencing. Plays a role in germline RNA interference (RNAi), and in particular, the silencing of endogenous small interfering RNA (endo-siRNA) target genes. May play a role in heterochromatin localization and condensation, and the siRNAi-directed trimethylation of 'Lys-9' of histone H3 in hermaphrodite X chromosomes. Promotes transgenerational epigenetic inheritance and germline immortality. This is ATPase morc-1 from Caenorhabditis elegans.